We begin with the raw amino-acid sequence, 307 residues long: Oxygen-dependent coproporphyrinogen-III oxidase (307 aa).

A substrate-binding site is contributed by S99. Residues H103 and H113 each coordinate a divalent metal cation. The Proton donor role is filled by H113. Position 115 to 117 (115 to 117) interacts with substrate; that stretch reads NVR. Positions 152 and 182 each coordinate a divalent metal cation. An important for dimerization region spans residues 247 to 282; it reads YVEFNLVFDRGTLFGLQSGGRTESILMSMPPVVNWR. Position 265–267 (265–267) interacts with substrate; that stretch reads GGR.

Belongs to the aerobic coproporphyrinogen-III oxidase family. As to quaternary structure, homodimer. Requires a divalent metal cation as cofactor.

The protein resides in the cytoplasm. It carries out the reaction coproporphyrinogen III + O2 + 2 H(+) = protoporphyrinogen IX + 2 CO2 + 2 H2O. The protein operates within porphyrin-containing compound metabolism; protoporphyrin-IX biosynthesis; protoporphyrinogen-IX from coproporphyrinogen-III (O2 route): step 1/1. Its function is as follows. Involved in the heme biosynthesis. Catalyzes the aerobic oxidative decarboxylation of propionate groups of rings A and B of coproporphyrinogen-III to yield the vinyl groups in protoporphyrinogen-IX. The chain is Oxygen-dependent coproporphyrinogen-III oxidase from Paraburkholderia xenovorans (strain LB400).